A 205-amino-acid polypeptide reads, in one-letter code: MKNLFLTSSFKDVVPLFTEFESNLQGKTVTFIPTASTVEEVTFYVEAGKKALESLGLLVEELDIATESLGEITTKLRKNDFIYVTGGNTFFLLQELKRTGADKLILEEIAAGKLYIGESAGAVITSPNIAYIQTMDSTKKAVNLTNYDALNLVDFSTLPHYNNTPFKEITQKIVTEYAGKSQIYPISNHEAIFIRGKEVITKRLS.

Residues serine 119 and histidine 160 each act as charge relay system in the active site.

This sequence belongs to the peptidase S51 family.

This is an uncharacterized protein from Listeria monocytogenes serovar 1/2a (strain ATCC BAA-679 / EGD-e).